The chain runs to 474 residues: Cysteine--tRNA ligase (474 aa).

A Zn(2+)-binding site is contributed by C34. The short motif at 36–46 (PTVYDYAHIGN) is the 'HIGH' region element. C219, H244, and E248 together coordinate Zn(2+). Residues 276–280 (KMSKS) carry the 'KMSKS' region motif. Position 279 (K279) interacts with ATP.

The protein belongs to the class-I aminoacyl-tRNA synthetase family. In terms of assembly, monomer. Zn(2+) serves as cofactor.

The protein resides in the cytoplasm. It catalyses the reaction tRNA(Cys) + L-cysteine + ATP = L-cysteinyl-tRNA(Cys) + AMP + diphosphate. The sequence is that of Cysteine--tRNA ligase (cysS) from Chlamydia pneumoniae (Chlamydophila pneumoniae).